Here is a 163-residue protein sequence, read N- to C-terminus: Neurotrophin-3 (163 aa).

Residues 1-3 (IQS) form the signal peptide. Positions 4 to 119 (TSMDQGILTE…VLNRTSRRKR (116 aa)) are excised as a propeptide. Residue Asn-112 is glycosylated (N-linked (GlcNAc...) asparagine).

Belongs to the NGF-beta family.

It is found in the secreted. Its function is as follows. Seems to promote the survival of visceral and proprioceptive sensory neurons. This chain is Neurotrophin-3 (NTF3), found in Chilabothrus striatus (Haitian boa constrictor).